The following is a 466-amino-acid chain: Ornithine decarboxylase (466 aa).

An N6-(pyridoxal phosphate)lysine modification is found at lysine 116. Pyridoxal 5'-phosphate is bound by residues serine 247, glycine 286, and 318-321 (EPGR). 362–363 (FD) provides a ligand contact to substrate. Cysteine 411 acts as the Proton donor; shared with dimeric partner in catalysis. A substrate-binding site is contributed by aspartate 412. Tyrosine 441 is a binding site for pyridoxal 5'-phosphate.

Belongs to the Orn/Lys/Arg decarboxylase class-II family. In terms of assembly, homodimer. Only the dimer is catalytically active, as the active sites are constructed of residues from both monomers. Requires pyridoxal 5'-phosphate as cofactor.

It is found in the cytoplasm. It carries out the reaction L-ornithine + H(+) = putrescine + CO2. It functions in the pathway amine and polyamine biosynthesis; putrescine biosynthesis via L-ornithine pathway; putrescine from L-ornithine: step 1/1. With respect to regulation, inhibited by antizyme (AZ) OAZ1 in response to polyamine levels. AZ inhibits the assembly of the functional homodimer by binding to ODC monomers and targeting them for ubiquitin-independent proteolytic destruction by the 26S proteasome. In terms of biological role, catalyzes the first and rate-limiting step of polyamine biosynthesis that converts ornithine into putrescine, which is the precursor for the polyamines, spermidine and spermine. Polyamines are essential for cell proliferation and are implicated in cellular processes, ranging from DNA replication to apoptosis. In Saccharomyces cerevisiae (strain ATCC 204508 / S288c) (Baker's yeast), this protein is Ornithine decarboxylase.